Here is a 703-residue protein sequence, read N- to C-terminus: Elongation factor G (703 aa).

Residues 9-292 form the tr-type G domain; sequence ERTRNIGIMA…AVVDYLPGPL (284 aa). GTP is bound by residues 18–25, 91–95, and 145–148; these read AHIDAGKT, DTPGH, and NKMD.

This sequence belongs to the TRAFAC class translation factor GTPase superfamily. Classic translation factor GTPase family. EF-G/EF-2 subfamily.

The protein resides in the cytoplasm. Its function is as follows. Catalyzes the GTP-dependent ribosomal translocation step during translation elongation. During this step, the ribosome changes from the pre-translocational (PRE) to the post-translocational (POST) state as the newly formed A-site-bound peptidyl-tRNA and P-site-bound deacylated tRNA move to the P and E sites, respectively. Catalyzes the coordinated movement of the two tRNA molecules, the mRNA and conformational changes in the ribosome. In Leuconostoc citreum (strain KM20), this protein is Elongation factor G.